We begin with the raw amino-acid sequence, 413 residues long: Glucose-1-phosphate adenylyltransferase (413 aa).

Residues tyrosine 102, glycine 167, 182 to 183 (EK), and serine 200 each bind alpha-D-glucose 1-phosphate.

The protein belongs to the bacterial/plant glucose-1-phosphate adenylyltransferase family. As to quaternary structure, homotetramer.

The catalysed reaction is alpha-D-glucose 1-phosphate + ATP + H(+) = ADP-alpha-D-glucose + diphosphate. Its pathway is glycan biosynthesis; glycogen biosynthesis. Involved in the biosynthesis of ADP-glucose, a building block required for the elongation reactions to produce glycogen. Catalyzes the reaction between ATP and alpha-D-glucose 1-phosphate (G1P) to produce pyrophosphate and ADP-Glc. The protein is Glucose-1-phosphate adenylyltransferase of Deinococcus deserti (strain DSM 17065 / CIP 109153 / LMG 22923 / VCD115).